The chain runs to 597 residues: Myrcene synthase, chloroplastic (597 aa).

The N-terminal 56 residues, 1 to 56 (MALKLLTSLPMYNFSRVPVSSKDPILLVTSRTRNGYLARPVQCMVANKVSTSPDIL), are a transit peptide targeting the chloroplast. 5 residues coordinate (2E)-geranyl diphosphate: Arg-310, Asp-347, Asp-351, Arg-488, and Asp-491. Positions 347 and 351 each coordinate Mg(2+). The DDXXD motif signature appears at 347 to 351 (DDVYD). 3 residues coordinate Mg(2+): Asp-491, Thr-495, and Glu-499.

Belongs to the terpene synthase family. Tpsb subfamily. Mg(2+) is required as a cofactor. Mn(2+) serves as cofactor.

It is found in the plastid. It localises to the chloroplast. It catalyses the reaction (2E)-geranyl diphosphate = beta-myrcene + diphosphate. Involved in monoterpene (C10) biosynthesis. The major product is myrcene followed by minor amounts (1.2%) of the cyclic monoterpene limonene. In Quercus ilex (Holly oak), this protein is Myrcene synthase, chloroplastic.